The following is a 140-amino-acid chain: MNLEALCKEAELSFYDDELVSENGRKIYRIYVQKEGGVNLDDCARLSEILSPIFDVEPPVNGEYFLEVSSPGLERKLSKIEHFAKSIGELVKITTNEKEKFEAKIIAVDDENITLENLENKEKTTINFNDIKKARTFIIW.

This sequence belongs to the RimP family.

Its subcellular location is the cytoplasm. Required for maturation of 30S ribosomal subunits. This chain is Ribosome maturation factor RimP, found in Campylobacter jejuni subsp. jejuni serotype O:23/36 (strain 81-176).